Consider the following 308-residue polypeptide: MKSIKRFALSAMGVAMLLVLTGCVNVDKTTGQPTGFIWNTIGAPMAEAIKYFATDKGLGFGVAIIIVTIIVRLIILPLGIYQSWKATLHSEKMNALKHVLEPHQTRLKEATTQEEKLEAQQALFAAQKEHGISMFGGVGCFPILLQMPFFSAIYFAAQHTEGVAQASYLGIPLGSPSMILVACAGVLYYLQSLLSLHGVEDEMQREQIKKMIYMSPLMIVVFSLFSPASVTLYWVVGGFMMILQQFIVNYIVRPKLRKKVREELAKNPPKASAFSKPSGRKDVTPEQPTAITSKKKHKNRNAGKQRSR.

The N-terminal stretch at 1 to 22 (MKSIKRFALSAMGVAMLLVLTG) is a signal peptide. A lipid anchor (N-palmitoyl cysteine) is attached at Cys-23. The S-diacylglycerol cysteine moiety is linked to residue Cys-23. Helical transmembrane passes span 60–80 (FGVA…PLGI), 135–155 (FGGV…AIYF), 168–188 (YLGI…GVLY), 211–226 (MIYM…SLFS), and 232–252 (LYWV…NYIV). The disordered stretch occupies residues 263 to 308 (ELAKNPPKASAFSKPSGRKDVTPEQPTAITSKKKHKNRNAGKQRSR). The span at 293–308 (SKKKHKNRNAGKQRSR) shows a compositional bias: basic residues.

It belongs to the OXA1/ALB3/YidC family. Type 2 subfamily.

It is found in the cell membrane. Functionally, required for the insertion and/or proper folding and/or complex formation of integral membrane proteins into the membrane. Involved in integration of membrane proteins that insert both dependently and independently of the Sec translocase complex, as well as at least some lipoproteins. The polypeptide is Membrane protein insertase YidC 1 (Streptococcus pneumoniae serotype 4 (strain ATCC BAA-334 / TIGR4)).